The sequence spans 272 residues: Short-chain dehydrogenase/reductase iacC (272 aa).

NADP(+)-binding residues include Ile-13, Asp-59, and Asn-88. Catalysis depends on proton donor residues Ser-150 and Tyr-169. Positions 169, 173, and 202 each coordinate NADP(+). The active-site Lowers pKa of active site Tyr is the Lys-173.

Belongs to the short-chain dehydrogenases/reductases (SDR) family.

The protein operates within secondary metabolite biosynthesis. Functionally, short-chain dehydrogenase/reductase; part of the gene cluster that mediates the biosynthesis of iso-A82775C, a enylepoxycyclohexane and biosynthetic precursor of the chloropestolide anticancer natural products. Within the cluster, the prenyltransferase iacE prenylates siccayne to generate pestalodiol E, using dimethylallyl diphosphate (DMAPP) as cosubstrate. The probable oxidoreductase iacF is then involved in the epoxidation of pestalodiol F to pestalodiol F, which is further converted to pestalofone A by the short-chain dehydrogenase/reductase iacG. Iso-A82775C is subsequently generated from pestalofone A by the short-chain dehydrogenase/reductase iacC. Iso-A82775C is further condensed with maldoxin via a Diels-Alder reaction to produce the anticancer natural products chloropestolides A to E. The chain is Short-chain dehydrogenase/reductase iacC from Pestalotiopsis fici (strain W106-1 / CGMCC3.15140).